The primary structure comprises 380 residues: Alanine racemase (380 aa).

The Proton acceptor; specific for D-alanine role is filled by K34. At K34 the chain carries N6-(pyridoxal phosphate)lysine. Position 135 (R135) interacts with substrate. The active-site Proton acceptor; specific for L-alanine is the Y267. M315 is a binding site for substrate.

Belongs to the alanine racemase family. It depends on pyridoxal 5'-phosphate as a cofactor.

It catalyses the reaction L-alanine = D-alanine. It participates in amino-acid biosynthesis; D-alanine biosynthesis; D-alanine from L-alanine: step 1/1. Functionally, catalyzes the interconversion of L-alanine and D-alanine. May also act on other amino acids. The sequence is that of Alanine racemase (alr) from Lawsonia intracellularis (strain PHE/MN1-00).